Consider the following 495-residue polypeptide: uncharacterized protein (495 aa).

A CHY-type zinc finger spans residues 389-457 (PLPNNGACEH…KDATCPHCGN (69 aa)). Residues cysteine 396, histidine 398, cysteine 410, cysteine 411, cysteine 417, cysteine 420, histidine 421, histidine 427, cysteine 437, cysteine 440, cysteine 452, and cysteine 455 each contribute to the Zn(2+) site. Basic and acidic residues predominate over residues 473–483 (GMRDRVRMSRK). Positions 473 to 495 (GMRDRVRMSRKDPRKYKRKHHGN) are disordered. The segment covering 484–495 (DPRKYKRKHHGN) has biased composition (basic residues).

The protein resides in the cytoplasm. This is an uncharacterized protein from Schizosaccharomyces pombe (strain 972 / ATCC 24843) (Fission yeast).